A 552-amino-acid chain; its full sequence is HTH-type transcriptional regulator SgrR (552 aa).

Residues 1–116 (MPSGRLQQQF…LISHLGRSFR (116 aa)) enclose the HTH marR-type domain. Positions 26 to 49 (LNELADLLNCSRRHMRTLLNTMQA) form a DNA-binding region, H-T-H motif. The tract at residues 163-493 (ELEADIAHHW…RDWQGDAAQW (331 aa)) is solute-binding.

Its function is as follows. Activates the small RNA gene sgrS under glucose-phosphate stress conditions as well as yfdZ. Represses its own transcription under both stress and non-stress conditions. Might act as a sensor of the intracellular accumulation of phosphoglucose by binding these molecules in its C-terminal solute-binding domain. This is HTH-type transcriptional regulator SgrR from Salmonella typhimurium (strain LT2 / SGSC1412 / ATCC 700720).